A 250-amino-acid polypeptide reads, in one-letter code: Archaeal flagellar motor scaffold protein FlaX (250 aa).

Over 1–9 (MAIQDLLQS) the chain is Extracellular. Residues 10 to 30 (SLFIILIGVGIPIAAFLEILF) traverse the membrane as a helical segment. Over 31 to 250 (RVILPKTKRV…MILEGGGVNG (220 aa)) the chain is Cytoplasmic. Over residues 42–61 (TQQSPQNISQEQRFPTQQKP) the composition is skewed to polar residues. The segment at 42–72 (TQQSPQNISQEQRFPTQQKPANDETSKYSSD) is disordered. Residues 62-72 (ANDETSKYSSD) are compositionally biased toward basic and acidic residues.

As to quaternary structure, the S.acidocaldarius archaellum assembly machinery and its filament consist of seven proteins (FlaB, FlaF, FlaG, FlaH, FlaI, FlaJ and FlaX). FlaX assembles into ring-shaped oligomers. Interacts directly with FlaH and the motor ATPase FlaI.

It is found in the archaeal flagellum. It localises to the cell membrane. The presence of the flagellar core components FlaH, FlaI and FlaJ seems to be crucial for the stability of FlaX. Component of the archaellum. FlaX, FlaH and FlaI form the core cytoplasmic motor complex of the crenarchaeal archaellum. FlaX forms a ring that may act as a membrane-bound cytoplasmic scaffold that guides the assembly of the archaellum motor complex. Is essential for archaellum assembly. The protein is Archaeal flagellar motor scaffold protein FlaX of Sulfolobus acidocaldarius (strain ATCC 33909 / DSM 639 / JCM 8929 / NBRC 15157 / NCIMB 11770).